We begin with the raw amino-acid sequence, 397 residues long: Phosphoglycerate kinase (397 aa).

Residues 21 to 23 (DFN), arginine 37, 60 to 63 (HLGR), arginine 119, and arginine 152 each bind substrate. ATP-binding positions include lysine 202, glycine 294, glutamate 325, and 351–354 (GGDS).

This sequence belongs to the phosphoglycerate kinase family. Monomer.

Its subcellular location is the cytoplasm. The catalysed reaction is (2R)-3-phosphoglycerate + ATP = (2R)-3-phospho-glyceroyl phosphate + ADP. Its pathway is carbohydrate degradation; glycolysis; pyruvate from D-glyceraldehyde 3-phosphate: step 2/5. The sequence is that of Phosphoglycerate kinase from Pseudothermotoga lettingae (strain ATCC BAA-301 / DSM 14385 / NBRC 107922 / TMO) (Thermotoga lettingae).